We begin with the raw amino-acid sequence, 121 residues long: Basic phospholipase A2 BmTX-I (121 aa).

Cystine bridges form between Cys-26–Cys-114, Cys-28–Cys-45, Cys-44–Cys-95, Cys-50–Cys-121, Cys-51–Cys-88, Cys-58–Cys-82, and Cys-76–Cys-86. Tyr-27, Gly-29, and Gly-31 together coordinate Ca(2+). His-48 is an active-site residue. Asp-49 is a binding site for Ca(2+). Residue Asp-89 is part of the active site.

Ca(2+) serves as cofactor. In terms of tissue distribution, expressed by the venom gland.

It localises to the secreted. The enzyme catalyses a 1,2-diacyl-sn-glycero-3-phosphocholine + H2O = a 1-acyl-sn-glycero-3-phosphocholine + a fatty acid + H(+). Its activity is regulated as follows. Inhibited by magnesium, cadmium and manganese ions. Also inhibited by crotapotin. Snake venom phospholipase A2 (PLA2) that shows enzymatic activity in the presence of a synthetic substrate. In vitro, blocks the neuromuscular transmission in young chick biventer cervicis preparations. In mice, induces myonecrosis and a systemic interleukin-6 response upon intramuscular injection. Also induces edema and exerts a strong pro-inflammatory effect. PLA2 catalyzes the calcium-dependent hydrolysis of the 2-acyl groups in 3-sn-phosphoglycerides. This Bothrops moojeni (Lance-headed viper) protein is Basic phospholipase A2 BmTX-I.